A 424-amino-acid polypeptide reads, in one-letter code: UPF0761 membrane protein Smlt0865 (424 aa).

Helical transmembrane passes span 48–68, 101–121, 144–164, 181–201, 216–236, and 251–271; these read VFAL…FPVF, SAGQ…LITL, FLVY…SLAV, WLAE…CITL, AVPG…GIGA, and VAFV…VLLG.

Belongs to the UPF0761 family.

It is found in the cell inner membrane. The protein is UPF0761 membrane protein Smlt0865 of Stenotrophomonas maltophilia (strain K279a).